The chain runs to 258 residues: Venom plasminogen activator LV-PA (258 aa).

A signal peptide spans 1–18; sequence MVLITVLANLLILQLSYA. A propeptide spanning residues 19–24 is cleaved from the precursor; it reads QKSSKL. The 225-residue stretch at 25 to 249 folds into the Peptidase S1 domain; the sequence is VFGGDECNIN…YTDWIQSIIA (225 aa). N-linked (GlcNAc...) asparagine glycosylation occurs at Asn-44. Cys-50 and Cys-66 are oxidised to a cystine. Catalysis depends on charge relay system residues His-65 and Asp-110. 3 cysteine pairs are disulfide-bonded: Cys-142-Cys-210, Cys-174-Cys-189, and Cys-200-Cys-225. Ser-204 acts as the Charge relay system in catalysis.

Belongs to the peptidase S1 family. Snake venom subfamily. In terms of assembly, monomer. Post-translationally, N-glycosylated. PubMed:17034951 shows that it contains approximately 10% carbohydrates, PubMed:10871053 shows that it contains approximately 20% carbohydrates. Expressed by the venom gland.

It localises to the secreted. Inhibited by the serine protease inhibitors NPGB, PMSF, p-aminobenzamidine and aprotinin. Not inhibited by soybean trypsin inhibitor or EDTA. In terms of biological role, snake venom serine protease that activates plasminogen. Weakly hydrolyzes the alpha chain of human fibrinogen without releasing fibrinopeptide A. Does not hydrolyze plasma kallikrein or factor Xa. Does not clot fibrinogen. Does not affect platelet function. Induces hypotensive effects on rats. Shows a preferential cleavage at Lys-|-Xaa over Arg-|-Xaa bonds. The sequence is that of Venom plasminogen activator LV-PA from Lachesis muta muta (Bushmaster).